The following is a 3460-amino-acid chain: Reelin (3460 aa).

The N-terminal stretch at 1–25 is a signal peptide; it reads MERSGWARQTFLLALLLGATLRARA. In terms of domain architecture, Reelin spans 26–190; that stretch reads AAGYYPRFSP…GAPTDVTVHP (165 aa). Cys40 and Cys126 form a disulfide bridge. Residue Asn140 is glycosylated (N-linked (GlcNAc...) asparagine). A disulfide bond links Cys154 and Cys178. N-linked (GlcNAc...) asparagine glycosylation is found at Asn257, Asn289, and Asn305. Cys539 and Cys580 are oxidised to a cystine. Residues 592–603 form a BNR 1 repeat; it reads EFSTNHGRSWSL. Cys608 and Cys613 are disulfide-bonded. A glycan (N-linked (GlcNAc...) asparagine) is linked at Asn628. An EGF-like 1 domain is found at 670 to 701; that stretch reads IGPSCLKFCSGRGQCTRHGCKCDPGFSGPACE. 2 cysteine pairs are disulfide-bonded: Cys674/Cys684 and Cys691/Cys700. A BNR 2 repeat occupies 798–809; sequence HYSYDNGITWKL. Cysteines 894 and 936 form a disulfide. The BNR 3 repeat unit spans residues 951 to 962; sequence EYSTNHGLTWHL. Cystine bridges form between Cys967/Cys974, Cys1033/Cys1043, and Cys1050/Cys1059. The EGF-like 2 domain occupies 1029–1060; sequence IGQQCPNMCSGHGSCDHGICRCDQGYQGTECH. The BNR 4 repeat unit spans residues 1156 to 1167; it reads QYSNNGGIQWHL. The N-linked (GlcNAc...) asparagine glycan is linked to Asn1266. An intrachain disulfide couples Cys1270 to Cys1309. The stretch at 1322–1333 is one BNR 5 repeat; the sequence is QYSHDAGMSWFL. A disulfide bond links Cys1338 and Cys1347. Positions 1408–1441 constitute an EGF-like 3 domain; sequence ISEPCPSYCSGHGDCISGVCFCDLGYTAAQGTCV. The BNR 6 repeat unit spans residues 1534-1545; the sequence is QYSNDNGILWHL. N-linked (GlcNAc...) asparagine glycosylation occurs at Asn1599. Cys1632 and Cys1672 form a disulfide bridge. A BNR 7 repeat occupies 1685 to 1696; sequence QYSLNNGKDWHL. Cys1701 and Cys1708 are joined by a disulfide. Asn1749 carries an N-linked (GlcNAc...) asparagine glycan. In terms of domain architecture, EGF-like 4 spans 1764 to 1795; it reads LASGCPWMCSGRGICDAGRCVCDRGFGGPYCV. Residues 1883 to 1894 form a BNR 8 repeat; that stretch reads QFSISGGITWHL. The N-linked (GlcNAc...) asparagine glycan is linked to Asn1920. Residues 2042 to 2053 form a BNR 9 repeat; the sequence is EFSRDFGATWHL. Zn(2+)-binding residues include His2060 and His2073. The EGF-like 5 domain maps to 2128 to 2160; it reads IGPQCEEMCNGQGSCINGTKCICDPGYSGPTCK. 3 disulfides stabilise this stretch: Cys2132–Cys2142, Cys2136–Cys2148, and Cys2150–Cys2159. Residue Asn2144 is glycosylated (N-linked (GlcNAc...) asparagine). Glu2178 contributes to the Zn(2+) binding site. A disulfide bridge links Cys2194 with Cys2234. A BNR 10 repeat occupies 2249–2260; that stretch reads QYSLNGGLSWSL. Residue Glu2263 participates in Zn(2+) binding. 2 N-linked (GlcNAc...) asparagine glycosylation sites follow: Asn2268 and Asn2316. 3 disulfide bridges follow: Cys2347/Cys2386, Cys2392/Cys2558, and Cys2543/Cys2583. Glu2396, Glu2398, and His2459 together coordinate Zn(2+). One copy of the BNR 11 repeat lies at 2398–2409; sequence EYSVDLGLSWHP. Residues 2477–2508 enclose the EGF-like 6 domain; sequence IGDGCIDMCSGHGRCIQGNCVCDEQWGGLYCD. A glycan (N-linked (GlcNAc...) asparagine) is linked at Asn2568. BNR repeat units lie at residues 2597-2608 and 2777-2788; these read EYSVNGGITWNL and QYSTDFGVSWNY. Cystine bridges form between Cys2793–Cys2800, Cys2856–Cys2866, Cys2860–Cys2871, Cys2873–Cys2882, and Cys2918–Cys2965. The region spanning 2852 to 2883 is the EGF-like 7 domain; the sequence is LGPGCLDNCRGHGDCLREQCICDPGYSGPNCY. Residue Asn2961 is glycosylated (N-linked (GlcNAc...) asparagine). The stretch at 2978 to 2989 is one BNR 14 repeat; the sequence is DYSTDGGITWTL. 2 N-linked (GlcNAc...) asparagine glycosylation sites follow: Asn3015 and Asn3072. The stretch at 3142-3154 is one BNR 15 repeat; the sequence is EYTKDARSDSWQL. A disulfide bridge connects residues Cys3159 and Cys3169. N-linked (GlcNAc...) asparagine glycosylation is present at Asn3184. Residues 3227 to 3259 form the EGF-like 8 domain; that stretch reads IGEACPKLCSGHGYCTTGAICICDESFQGDDCS. 4 cysteine pairs are disulfide-bonded: Cys3231–Cys3241, Cys3235–Cys3247, Cys3249–Cys3258, and Cys3295–Cys3345. The BNR 16 repeat unit spans residues 3362 to 3373; sequence QYSVNNGITWHV. Residues Asn3411 and Asn3438 are each glycosylated (N-linked (GlcNAc...) asparagine).

This sequence belongs to the reelin family. In terms of assembly, oligomer of disulfide-linked homodimers. In terms of processing, N-glycosylated and to a lesser extent also O-glycosylated. Abundantly produced during brain ontogenesis by the Cajal-Retzius cells and other pioneer neurons located in the telencephalic marginal zone and by granule cells of the external granular layer of the cerebellum. In adult brain, preferentially expressed in GABAergic interneurons of prefrontal cortices, temporal cortex, hippocampus and glutamatergic granule cells of cerebellum. Expression is reduced to about 50% in patients with schizophrenia. Also expressed in fetal and adult liver.

It is found in the secreted. Its subcellular location is the extracellular space. The protein resides in the extracellular matrix. Its function is as follows. Extracellular matrix serine protease secreted by pioneer neurons that plays a role in layering of neurons in the cerebral cortex and cerebellum by coordinating cell positioning during neurodevelopment. Regulates microtubule function in neurons and neuronal migration. Binding to the extracellular domains of lipoprotein receptors VLDLR and LRP8/APOER2 induces tyrosine phosphorylation of DAB1 and modulation of TAU phosphorylation. Affects migration of sympathetic preganglionic neurons in the spinal cord, where it seems to act as a barrier to neuronal migration. Enzymatic activity is important for the modulation of cell adhesion. In Homo sapiens (Human), this protein is Reelin (RELN).